Here is a 467-residue protein sequence, read N- to C-terminus: E3 ubiquitin-protein ligase TRIM11 (467 aa).

The segment at 16–57 (CAICLDYFTDPVMTDCGHNFCRECIRRCWGQPEGPYACPECR) adopts an RING-type zinc-finger fold. A Phosphoserine modification is found at serine 85. A B box-type zinc finger spans residues 87–127 (VPQGVCAAHREPLTTFCGDDLSLLCPTCERSEHWAHRVRPL). Zn(2+) contacts are provided by cysteine 92, histidine 95, cysteine 114, and histidine 119. A coiled-coil region spans residues 127–207 (LQEAADDLKG…KLEEEELEVL (81 aa)). The B30.2/SPRY domain occupies 267–460 (ELRTVCRVPG…MTICRLIGVS (194 aa)). Over residues 304–313 (DRRSVQRGEQ) the composition is skewed to basic and acidic residues. The tract at residues 304–325 (DRRSVQRGEQRQALPDSPERFD) is disordered.

This sequence belongs to the TRIM/RBCC family. As to quaternary structure, binds cytoplasmic tail of integrin alpha-1. Interacts with the HN peptide. Interacts with PHOX2B. Interacts (when autoubiquitinated) with SQSTM1/p62; promoting AIM2 recruitment to autophagosomes. Interacts with AIM2; promoting its autophagy-dependent degradation. Post-translationally, autoubiquitinated upon DNA stimulation; autoubiquitination promotes interaction with SQSTM1/p62 and recruitment of AIM2 to autophagosomes.

The protein localises to the cytoplasm. Its subcellular location is the nucleus. The enzyme catalyses S-ubiquitinyl-[E2 ubiquitin-conjugating enzyme]-L-cysteine + [acceptor protein]-L-lysine = [E2 ubiquitin-conjugating enzyme]-L-cysteine + N(6)-ubiquitinyl-[acceptor protein]-L-lysine.. The protein operates within protein modification; protein ubiquitination. In terms of biological role, E3 ubiquitin-protein ligase that promotes the degradation of insoluble ubiquitinated proteins, including insoluble PAX6, poly-Gln repeat expanded HTT and poly-Ala repeat expanded ARX. Mediates PAX6 ubiquitination leading to proteasomal degradation, thereby modulating cortical neurogenesis. May also inhibit PAX6 transcriptional activity, possibly in part by preventing the binding of PAX6 to its consensus sequences. May contribute to the regulation of the intracellular level of HN (humanin) or HN-containing proteins through the proteasomal degradation pathway. Mediates MED15 ubiquitination leading to proteasomal degradation. May contribute to the innate restriction of retroviruses. Upon overexpression, reduces HIV-1 and murine leukemia virus infectivity, by suppressing viral gene expression. Antiviral activity depends on a functional E3 ubiquitin-protein ligase domain. May regulate TRIM5 turnover via the proteasome pathway, thus counteracting the TRIM5-mediated cross-species restriction of retroviral infection at early stages of the retroviral life cycle. Acts as an inhibitor of the AIM2 inflammasome by promoting autophagy-dependent degradation of AIM2. Mechanistically, undergoes autoubiquitination upon DNA stimulation, promoting interaction with AIM2 and SQSTM1/p62, leading to AIM2 recruitment to autophagosomes. This is E3 ubiquitin-protein ligase TRIM11 (Trim11) from Rattus norvegicus (Rat).